Here is a 358-residue protein sequence, read N- to C-terminus: Phospho-N-acetylmuramoyl-pentapeptide-transferase (358 aa).

The next 10 membrane-spanning stretches (helical) occupy residues 26–46, 70–90, 94–114, 134–154, 169–189, 197–217, 234–254, 261–281, 286–306, and 335–355; these read AIYATITALMIAFILGPWLID, GTPTMGGTLILLAIVLPTLLW, TNVYVWVTLLVTVGFGAVGFV, MLWLMLIAGTAGVMLYSYPPF, ELGLFYIPFAVLVIVGASNAV, GLAIGPTIIASGTYLLFAYLA, AGELAVLCGAMVGAGLGFLWF, VFMGDVGSLSLGGALGTIAVI, IVLVIVGGIFVVEALSVIVQV, and KIIVRFWIISIILALVALSTL.

The protein belongs to the glycosyltransferase 4 family. MraY subfamily. It depends on Mg(2+) as a cofactor.

The protein localises to the cell inner membrane. The catalysed reaction is UDP-N-acetyl-alpha-D-muramoyl-L-alanyl-gamma-D-glutamyl-meso-2,6-diaminopimeloyl-D-alanyl-D-alanine + di-trans,octa-cis-undecaprenyl phosphate = di-trans,octa-cis-undecaprenyl diphospho-N-acetyl-alpha-D-muramoyl-L-alanyl-D-glutamyl-meso-2,6-diaminopimeloyl-D-alanyl-D-alanine + UMP. Its pathway is cell wall biogenesis; peptidoglycan biosynthesis. Its function is as follows. Catalyzes the initial step of the lipid cycle reactions in the biosynthesis of the cell wall peptidoglycan: transfers peptidoglycan precursor phospho-MurNAc-pentapeptide from UDP-MurNAc-pentapeptide onto the lipid carrier undecaprenyl phosphate, yielding undecaprenyl-pyrophosphoryl-MurNAc-pentapeptide, known as lipid I. The chain is Phospho-N-acetylmuramoyl-pentapeptide-transferase from Syntrophotalea carbinolica (strain DSM 2380 / NBRC 103641 / GraBd1) (Pelobacter carbinolicus).